The sequence spans 347 residues: MRIDFIRQRLRAQGAKPCHEQRILRIWAQVLPTEGGRSRPDDFLPQAVRDAMPALLADLDGLARLRSQHPGEDGSARLLVELADGQTVESVLLPRDGLCVSTQVGCAVGCVFCMTGREGLLRQVGSAEIVAQVVLARRQRLVKKVVFMGMGEPAHNLDNVMEAIDFLGTTGAIGHKNLVFSTVGDPRVFERLPLGPVKPALALSLHTTRADLRAQLLPRAPRMDPADLVERAEAYARATSYPIQYQWTLLEGINDGPDEVEGIVRLLHGKYAVLNMIPYNTVPDLPYTRPSWEAAAALARTLHRRGILTKLRQSAGQDVEGGCGQLRARELAPSARRIEIRPVASLP.

The active-site Proton acceptor is E89. Residues 92-318 (LLPRDGLCVS…TKLRQSAGQD (227 aa)) enclose the Radical SAM core domain. Residues C99 and C323 are joined by a disulfide bond. [4Fe-4S] cluster contacts are provided by C106, C110, and C113. S-adenosyl-L-methionine-binding positions include 151–152 (GE), S181, 204–206 (SLH), and N280. C323 functions as the S-methylcysteine intermediate in the catalytic mechanism.

Belongs to the radical SAM superfamily. RlmN family. Requires [4Fe-4S] cluster as cofactor.

Its subcellular location is the cytoplasm. This Leptothrix cholodnii (strain ATCC 51168 / LMG 8142 / SP-6) (Leptothrix discophora (strain SP-6)) protein is Probable RNA methyltransferase Lcho_2507.